Reading from the N-terminus, the 362-residue chain is Ribosome-binding ATPase YchF (362 aa).

Positions 3 to 255 constitute an OBG-type G domain; it reads FKCGIIGLPN…MNEDEQKYFM (253 aa). 12 to 17 contributes to the ATP binding site; that stretch reads NVGKST. Residues serine 16 and threonine 36 each coordinate Mg(2+). Residues 277–360 enclose the TGS domain; that stretch reads NLITFFTAGI…QDGDIINFLF (84 aa).

This sequence belongs to the TRAFAC class OBG-HflX-like GTPase superfamily. OBG GTPase family. YchF/OLA1 subfamily. Mg(2+) serves as cofactor.

In terms of biological role, ATPase that binds to both the 70S ribosome and the 50S ribosomal subunit in a nucleotide-independent manner. In Buchnera aphidicola subsp. Schizaphis graminum (strain Sg), this protein is Ribosome-binding ATPase YchF.